Reading from the N-terminus, the 962-residue chain is Phagocyte signaling-impaired protein (962 aa).

3 TPR repeats span residues 45–78, 79–112, and 523–560; these read LCARALKGLALLRLGRYEESHGCLQAVAEDKPTD, DSTLQVLSFCYREMEQLNKIVELYQHAVKKNPGN, and QIQLDSMGYVHCQLLPLCGRFSGARNSYDTTMKFFTNS. The disordered stretch occupies residues 856–880; sequence TKVKKKQGDNKTQDTPQPVSEKERS.

This sequence belongs to the MDM20/NAA25 family. Component of the N-terminal acetyltransferase B (NatB) complex.

It localises to the lysosome. Its function is as follows. Non-catalytic subunit of the NatB complex which catalyzes acetylation of the N-terminal methionine residues of proteins beginning with Met-Asp or Met-Glu. Has 2 roles in the larval immune response: required both for the phagocytic degradation of internalized bacteria and for the induction of Defensin in the fat body. Within the phagocytic blood cells, has a role in detection of infection and activation of the humoral immune response. The sequence is that of Phagocyte signaling-impaired protein from Drosophila pseudoobscura pseudoobscura (Fruit fly).